Here is a 275-residue protein sequence, read N- to C-terminus: MWKLWGSWPEGDRVRIALIGHGPIAAHVAAHLPVGVQLTGALCRPGRDDAARAALGVSVAQALEGLPQRPDLLVDCAGHSGLRAHGLTALGAGVEVLTVSVGALADAVFCAELEDAARAGGTRLCLASGAIGALDALAAAAMGTGLQVTYTGRKPPQGWRGSRAEKVLDLKALTGPVTHFTGTARAAAQAYPKNANVAAAVALAGAGLDATRAELIADPGAAANIHEIAAEGAFGRFRFQIEGLPLPGNPRSSALTALSLLAALRQRGAAIRPSF.

NAD(+)-binding residues include A130 and N196. H226 is an active-site residue.

Belongs to the L-aspartate dehydrogenase family.

The catalysed reaction is L-aspartate + NADP(+) + H2O = oxaloacetate + NH4(+) + NADPH + H(+). It catalyses the reaction L-aspartate + NAD(+) + H2O = oxaloacetate + NH4(+) + NADH + H(+). It functions in the pathway cofactor biosynthesis; NAD(+) biosynthesis; iminoaspartate from L-aspartate (dehydrogenase route): step 1/1. In terms of biological role, specifically catalyzes the NAD or NADP-dependent dehydrogenation of L-aspartate to iminoaspartate. The chain is L-aspartate dehydrogenase from Ruegeria pomeroyi (strain ATCC 700808 / DSM 15171 / DSS-3) (Silicibacter pomeroyi).